A 119-amino-acid chain; its full sequence is Protein TusC (119 aa).

Belongs to the DsrF/TusC family. In terms of assembly, heterohexamer, formed by a dimer of trimers. The hexameric TusBCD complex contains 2 copies each of TusB, TusC and TusD. The TusBCD complex interacts with TusE.

It localises to the cytoplasm. Part of a sulfur-relay system required for 2-thiolation of 5-methylaminomethyl-2-thiouridine (mnm(5)s(2)U) at tRNA wobble positions. In Buchnera aphidicola subsp. Schizaphis graminum (strain Sg), this protein is Protein TusC.